We begin with the raw amino-acid sequence, 86 residues long: MVKIRLTRGGAKKRPFYHIIVTDVRSARDGRNIERVGFYNPVAQGGEKRIELDLARVDHWVKNGAQPTEKVRNLIKEATKSQAAAA.

Belongs to the bacterial ribosomal protein bS16 family.

This chain is Small ribosomal subunit protein bS16, found in Stenotrophomonas maltophilia (strain R551-3).